Reading from the N-terminus, the 222-residue chain is 2-C-methyl-D-erythritol 4-phosphate cytidylyltransferase (222 aa).

It belongs to the IspD/TarI cytidylyltransferase family. IspD subfamily.

It carries out the reaction 2-C-methyl-D-erythritol 4-phosphate + CTP + H(+) = 4-CDP-2-C-methyl-D-erythritol + diphosphate. It functions in the pathway isoprenoid biosynthesis; isopentenyl diphosphate biosynthesis via DXP pathway; isopentenyl diphosphate from 1-deoxy-D-xylulose 5-phosphate: step 2/6. Its function is as follows. Catalyzes the formation of 4-diphosphocytidyl-2-C-methyl-D-erythritol from CTP and 2-C-methyl-D-erythritol 4-phosphate (MEP). The chain is 2-C-methyl-D-erythritol 4-phosphate cytidylyltransferase from Porphyromonas gingivalis (strain ATCC 33277 / DSM 20709 / CIP 103683 / JCM 12257 / NCTC 11834 / 2561).